A 358-amino-acid polypeptide reads, in one-letter code: Cholesterol galactosyltransferase (358 aa).

Belongs to the glycosyltransferase 2 family.

The catalysed reaction is cholesterol + UDP-alpha-D-galactose = cholesteryl 3-beta-D-galactoside + UDP + H(+). The protein operates within glycolipid biosynthesis. Galactosyltransferase involved in the synthesis of cholesterol glycolipids, which are formed by the use of host-derived cholesterol and have been shown to be immunogenic, and possibly contribute to Lyme disease pathogenesis. Catalyzes the formation of cholesteryl beta-D-galactopyranoside (CGal) from cholesterol and UDP-alpha-D-galactose. Cannot use GDP-mannose. In Borreliella burgdorferi (strain ATCC 35210 / DSM 4680 / CIP 102532 / B31) (Borrelia burgdorferi), this protein is Cholesterol galactosyltransferase.